The sequence spans 308 residues: tRNA pseudouridine synthase B (308 aa).

Asp51 serves as the catalytic Nucleophile.

It belongs to the pseudouridine synthase TruB family. Type 1 subfamily.

It catalyses the reaction uridine(55) in tRNA = pseudouridine(55) in tRNA. In terms of biological role, responsible for synthesis of pseudouridine from uracil-55 in the psi GC loop of transfer RNAs. The sequence is that of tRNA pseudouridine synthase B from Aromatoleum aromaticum (strain DSM 19018 / LMG 30748 / EbN1) (Azoarcus sp. (strain EbN1)).